The following is a 382-amino-acid chain: Homoserine O-acetyltransferase (382 aa).

In terms of domain architecture, AB hydrolase-1 spans asparagine 52–glutamate 356. Serine 157 acts as the Nucleophile in catalysis. Arginine 227 provides a ligand contact to substrate. Residues aspartate 320 and histidine 350 contribute to the active site. Aspartate 351 serves as a coordination point for substrate.

It belongs to the AB hydrolase superfamily. MetX family. In terms of assembly, homodimer.

It localises to the cytoplasm. The enzyme catalyses L-homoserine + acetyl-CoA = O-acetyl-L-homoserine + CoA. It participates in amino-acid biosynthesis; L-methionine biosynthesis via de novo pathway; O-acetyl-L-homoserine from L-homoserine: step 1/1. Functionally, transfers an acetyl group from acetyl-CoA to L-homoserine, forming acetyl-L-homoserine. In Mycobacterium leprae (strain TN), this protein is Homoserine O-acetyltransferase.